Reading from the N-terminus, the 64-residue chain is uncharacterized protein (64 aa).

A helical transmembrane segment spans residues 15–37 (VVVPRFVRFIVYVVLFTVAVQRV).

This sequence belongs to the HHV-5 US34A protein family.

Its subcellular location is the host membrane. This is an uncharacterized protein from Homo sapiens (Human).